Here is a 454-residue protein sequence, read N- to C-terminus: Probable diacyglycerol O-acyltransferase tgs2 (454 aa).

H139 serves as the catalytic Proton acceptor.

The protein belongs to the long-chain O-acyltransferase family.

The enzyme catalyses an acyl-CoA + a 1,2-diacyl-sn-glycerol = a triacyl-sn-glycerol + CoA. It carries out the reaction a long chain fatty alcohol + a fatty acyl-CoA = a wax ester + CoA. Its pathway is glycerolipid metabolism; triacylglycerol biosynthesis. Catalyzes the terminal and only committed step in triacylglycerol synthesis by using diacylglycerol and fatty acyl CoA as substrates. Required for storage lipid synthesis. This Mycobacterium tuberculosis (strain CDC 1551 / Oshkosh) protein is Probable diacyglycerol O-acyltransferase tgs2 (tgs2).